A 164-amino-acid polypeptide reads, in one-letter code: Ribosome maturation factor RimM (164 aa).

One can recognise a PRC barrel domain in the interval 92–164 (PDSEYYVANL…FVVIVPPEFI (73 aa)).

This sequence belongs to the RimM family. Binds ribosomal protein uS19.

The protein resides in the cytoplasm. Functionally, an accessory protein needed during the final step in the assembly of 30S ribosomal subunit, possibly for assembly of the head region. Essential for efficient processing of 16S rRNA. May be needed both before and after RbfA during the maturation of 16S rRNA. It has affinity for free ribosomal 30S subunits but not for 70S ribosomes. The polypeptide is Ribosome maturation factor RimM (Orientia tsutsugamushi (strain Ikeda) (Rickettsia tsutsugamushi)).